The following is a 155-amino-acid chain: UPF0178 protein mlr0875 (155 aa).

This sequence belongs to the UPF0178 family.

The polypeptide is UPF0178 protein mlr0875 (Mesorhizobium japonicum (strain LMG 29417 / CECT 9101 / MAFF 303099) (Mesorhizobium loti (strain MAFF 303099))).